The primary structure comprises 1217 residues: ATP-dependent helicase/nuclease subunit A (1217 aa).

The region spanning 10 to 475 (VIWTDAQWQS…IDLSQNFRSR (466 aa)) is the UvrD-like helicase ATP-binding domain. 31–38 (AAAGSGKT) contributes to the ATP binding site. One can recognise a UvrD-like helicase C-terminal domain in the interval 476–786 (KEVLSTTNYI…RMMTIHSSKG (311 aa)).

The protein belongs to the helicase family. AddA subfamily. As to quaternary structure, heterodimer of AddA and AddB/RexB. The cofactor is Mg(2+).

It carries out the reaction Couples ATP hydrolysis with the unwinding of duplex DNA by translocating in the 3'-5' direction.. The catalysed reaction is ATP + H2O = ADP + phosphate + H(+). Functionally, the heterodimer acts as both an ATP-dependent DNA helicase and an ATP-dependent, dual-direction single-stranded exonuclease. Recognizes the chi site generating a DNA molecule suitable for the initiation of homologous recombination. The AddA nuclease domain is required for chi fragment generation; this subunit has the helicase and 3' -&gt; 5' nuclease activities. This is ATP-dependent helicase/nuclease subunit A from Staphylococcus aureus (strain MRSA252).